A 509-amino-acid chain; its full sequence is Dol-P-Glc:Glc(2)Man(9)GlcNAc(2)-PP-Dol alpha-1,2-glucosyltransferase (509 aa).

At 1–4 (MGKL) the chain is on the cytoplasmic side. The helical transmembrane segment at 5–25 (AVAAITSLWVIPMSIIVNHIV) threads the bilayer. Topologically, residues 26–57 (PEPYMDEIFHVPQAQQYCNGNFRSWDPMITTP) are lumenal. Residues 58 to 78 (PGLYYLSLAHVASLFPGMLLM) form a helical membrane-spanning segment. Over 79–99 (ENTSQSFSEACSTSVLRSTNA) the chain is Cytoplasmic. A helical membrane pass occupies residues 100–120 (VSAVLCGVLVYEIIRFLGPNL). Residues 121–124 (SDRK) lie on the Lumenal side of the membrane. A helical transmembrane segment spans residues 125–145 (ATFMALVMSLYPLHWFFTFLY). The Cytoplasmic portion of the chain corresponds to 146–170 (YTDVASLTAVLAMYLTCLKRRYVLS). The helical transmembrane segment at 171–191 (ALFGTLAVFIRQTNVVWMLFV) threads the bilayer. The Lumenal segment spans residues 192-285 (ACSGILDFTL…KWRILIKFSP (94 aa)). The tract at residues 210–254 (QEVNQELHQSSNKKGATLRSNLRKRKSDISSDTSDPFNHGQTVPS) is disordered. 2 stretches are compositionally biased toward polar residues: residues 215–229 (ELHQ…TLRS) and 239–254 (SSDT…TVPS). A helical transmembrane segment spans residues 286–306 (FIFVVVAFGIFILWNGGIVLG). At 307–311 (AKEAH) the chain is on the cytoplasmic side. A helical membrane pass occupies residues 312–332 (VVSLHFAQIMYFSLVSALFTA). Over 333-355 (PLHFSVNQLRHQFHQLHRNWSLS) the chain is Lumenal. The N-linked (GlcNAc...) asparagine glycan is linked to Asn-351. The chain crosses the membrane as a helical span at residues 356–376 (LILTLVALVAGFVSVHFFSLA). The Cytoplasmic segment spans residues 377 to 400 (HPYLLADNRHYPFYLWRKIINAHW). A helical membrane pass occupies residues 401–421 (LMKYILVPVYVYSWFSILTLL). The Lumenal segment spans residues 422 to 428 (AKTRRQT). A helical transmembrane segment spans residues 429 to 449 (WILVYFLATCGVLVPTPLIEF). At 450 to 472 (RYYTIPFYLFMLHSCVRSSSFAT) the chain is on the cytoplasmic side. A helical membrane pass occupies residues 473–493 (WLLIGTIFVSINVFTMAMFLF). At 494–509 (RPFKWSHEDGVQRFIW) the chain is on the lumenal side.

It belongs to the ALG10 glucosyltransferase family.

The protein resides in the endoplasmic reticulum membrane. The enzyme catalyses an alpha-D-Glc-(1-&gt;3)-alpha-D-Glc-(1-&gt;3)-alpha-D-Man-(1-&gt;2)-alpha-D-Man-(1-&gt;2)-alpha-D-Man-(1-&gt;3)-[alpha-D-Man-(1-&gt;2)-alpha-D-Man-(1-&gt;3)-[alpha-D-Man-(1-&gt;2)-alpha-D-Man-(1-&gt;6)]-alpha-D-Man-(1-&gt;6)]-beta-D-Man-(1-&gt;4)-beta-D-GlcNAc-(1-&gt;4)-alpha-D-GlcNAc-diphospho-di-trans,poly-cis-dolichol + a di-trans,poly-cis-dolichyl beta-D-glucosyl phosphate = a alpha-D-Glc-(1-&gt;2)-alpha-D-Glc-(1-&gt;3)-alpha-D-Glc-(1-&gt;3)-alpha-D-Man-(1-&gt;2)-alpha-D-Man-(1-&gt;2)-alpha-D-Man-(1-&gt;3)-[alpha-D-Man-(1-&gt;2)-alpha-D-Man-(1-&gt;3)-[alpha-D-Man-(1-&gt;2)-alpha-D-Man-(1-&gt;6)]-alpha-D-Man-(1-&gt;6)]-beta-D-Man-(1-&gt;4)-beta-D-GlcNAc-(1-&gt;4)-alpha-D-GlcNAc-diphospho-di-trans,poly-cis-dolichol + a di-trans,poly-cis-dolichyl phosphate + H(+). It functions in the pathway protein modification; protein glycosylation. Dol-P-Glc:Glc(2)Man(9)GlcNAc(2)-PP-Dol alpha-1,2-glucosyltransferase that operates in the biosynthetic pathway of dolichol-linked oligosaccharides, the glycan precursors employed in protein asparagine (N)-glycosylation. The assembly of dolichol-linked oligosaccharides begins on the cytosolic side of the endoplasmic reticulum membrane and finishes in its lumen. The sequential addition of sugars to dolichol pyrophosphate produces dolichol-linked oligosaccharides containing fourteen sugars, including two GlcNAcs, nine mannoses and three glucoses. Once assembled, the oligosaccharide is transferred from the lipid to nascent proteins by oligosaccharyltransferases. In the lumen of the endoplasmic reticulum, adds the third and last glucose residue from dolichyl phosphate glucose (Dol-P-Glc) onto the lipid-linked oligosaccharide intermediate Glc(2)Man(9)GlcNAc(2)-PP-Dol to produce Glc(3)Man(9)GlcNAc(2)-PP-Dol. In Arabidopsis thaliana (Mouse-ear cress), this protein is Dol-P-Glc:Glc(2)Man(9)GlcNAc(2)-PP-Dol alpha-1,2-glucosyltransferase.